We begin with the raw amino-acid sequence, 603 residues long: NADH-ubiquinone oxidoreductase chain 5 (603 aa).

The next 16 membrane-spanning stretches (helical) occupy residues 4–24, 38–58, 87–107, 117–137, 140–160, 171–191, 211–233, 241–261, 273–293, 301–320, 331–351, 366–386, 409–429, 457–477, 488–508, and 583–603; these read LPTL…LSPL, MAVS…MHSG, LIFM…SLWY, FFKY…ANNL, LFIG…WWYG, AMIY…WFLL, LPLT…HPWL, TPVS…FLLI, ILTL…ICAL, IIAF…IGIN, THAF…HSLG, LPFT…MPFL, LLIT…IIFF, LMLG…PTTV, FMAL…SSFT, and MIKL…LLII.

It belongs to the complex I subunit 5 family.

It localises to the mitochondrion inner membrane. The catalysed reaction is a ubiquinone + NADH + 5 H(+)(in) = a ubiquinol + NAD(+) + 4 H(+)(out). Functionally, core subunit of the mitochondrial membrane respiratory chain NADH dehydrogenase (Complex I) that is believed to belong to the minimal assembly required for catalysis. Complex I functions in the transfer of electrons from NADH to the respiratory chain. The immediate electron acceptor for the enzyme is believed to be ubiquinone. This Dugong dugon (Dugong) protein is NADH-ubiquinone oxidoreductase chain 5 (MT-ND5).